The following is a 647-amino-acid chain: 1-deoxy-D-xylulose-5-phosphate synthase (647 aa).

Thiamine diphosphate is bound by residues H79 and 120–122 (GHA). D152 is a binding site for Mg(2+). Residues 153 to 154 (GS), N181, F293, and E377 contribute to the thiamine diphosphate site. N181 is a Mg(2+) binding site.

The protein belongs to the transketolase family. DXPS subfamily. In terms of assembly, homodimer. It depends on Mg(2+) as a cofactor. Requires thiamine diphosphate as cofactor.

The enzyme catalyses D-glyceraldehyde 3-phosphate + pyruvate + H(+) = 1-deoxy-D-xylulose 5-phosphate + CO2. Its pathway is metabolic intermediate biosynthesis; 1-deoxy-D-xylulose 5-phosphate biosynthesis; 1-deoxy-D-xylulose 5-phosphate from D-glyceraldehyde 3-phosphate and pyruvate: step 1/1. Catalyzes the acyloin condensation reaction between C atoms 2 and 3 of pyruvate and glyceraldehyde 3-phosphate to yield 1-deoxy-D-xylulose-5-phosphate (DXP). The chain is 1-deoxy-D-xylulose-5-phosphate synthase from Bacteroides thetaiotaomicron (strain ATCC 29148 / DSM 2079 / JCM 5827 / CCUG 10774 / NCTC 10582 / VPI-5482 / E50).